We begin with the raw amino-acid sequence, 144 residues long: Small ribosomal subunit protein eS12 (144 aa).

It belongs to the eukaryotic ribosomal protein eS12 family.

This Trypanosoma brucei brucei protein is Small ribosomal subunit protein eS12 (RPS12).